Reading from the N-terminus, the 235-residue chain is Urease accessory protein UreF (235 aa).

The protein belongs to the UreF family. In terms of assembly, ureD, UreF and UreG form a complex that acts as a GTP-hydrolysis-dependent molecular chaperone, activating the urease apoprotein by helping to assemble the nickel containing metallocenter of UreC. The UreE protein probably delivers the nickel.

It is found in the cytoplasm. In terms of biological role, required for maturation of urease via the functional incorporation of the urease nickel metallocenter. The protein is Urease accessory protein UreF of Pseudoalteromonas translucida (strain TAC 125).